The primary structure comprises 613 residues: Dihydroxy-acid dehydratase (613 aa).

Asp-81 is a Mg(2+) binding site. [2Fe-2S] cluster is bound at residue Cys-122. Residues Asp-123 and Lys-124 each coordinate Mg(2+). At Lys-124 the chain carries N6-carboxylysine. Cys-195 contributes to the [2Fe-2S] cluster binding site. Glu-491 serves as a coordination point for Mg(2+). The active-site Proton acceptor is Ser-517.

This sequence belongs to the IlvD/Edd family. In terms of assembly, homodimer. Requires [2Fe-2S] cluster as cofactor. Mg(2+) serves as cofactor.

The catalysed reaction is (2R)-2,3-dihydroxy-3-methylbutanoate = 3-methyl-2-oxobutanoate + H2O. It carries out the reaction (2R,3R)-2,3-dihydroxy-3-methylpentanoate = (S)-3-methyl-2-oxopentanoate + H2O. It functions in the pathway amino-acid biosynthesis; L-isoleucine biosynthesis; L-isoleucine from 2-oxobutanoate: step 3/4. It participates in amino-acid biosynthesis; L-valine biosynthesis; L-valine from pyruvate: step 3/4. In terms of biological role, functions in the biosynthesis of branched-chain amino acids. Catalyzes the dehydration of (2R,3R)-2,3-dihydroxy-3-methylpentanoate (2,3-dihydroxy-3-methylvalerate) into 2-oxo-3-methylpentanoate (2-oxo-3-methylvalerate) and of (2R)-2,3-dihydroxy-3-methylbutanoate (2,3-dihydroxyisovalerate) into 2-oxo-3-methylbutanoate (2-oxoisovalerate), the penultimate precursor to L-isoleucine and L-valine, respectively. This chain is Dihydroxy-acid dehydratase, found in Vibrio vulnificus (strain YJ016).